A 595-amino-acid polypeptide reads, in one-letter code: MATKARVMYDFAAEPGNNELTVNEGEIITITNPDVGGGWLEGRNIKGERGLVPTDYVEILPSDGKDQFSCGNSVADQAFLDSLSASTAQASSSAASNNHQVGSGNDPWSAWSASKSGNWESSEGWGAQPEGAGAQRNTNTPNNWDTAFGHPQAYQGPATGDDDDWDEDWDGPKSSSYFKDSESADAGGAQRGNSRASSSSMKIPLNKFPGFAKPGTEQYLLAKQLAKPKEKIPIIVGDYGPMWVYPTSTFDCVVADPRKGSKMYGLKSYIEYQLTPTNTNRSVNHRYKHFDWLYERLLVKFGSAIPIPSLPDKQVTGRFEEEFIKMRMERLQAWMTRMCRHPVISESEVFQQFLNFRDEKEWKTGKRKAERDELAGVMIFSTMEPEAPDLDLVEIEQKCEAVGKFTKAMDDGVKELLTVGQEHWKRCTGPLPKEYQKIGKALQSLATVFSSSGYQGETDLNDAITEAGKTYEEIASLVAEQPKKDLHFLMECNHEYKGFLGCFPDIIGTHKGAIEKVKESDKLVATSKITLQDKQNMVKRVSIMSYALQAEMNHFHSNRIYDYNSVIRLYLEQQVQFYETIAEKLRQALSRFPVM.

The SH3 domain maps to 1 to 62 (MATKARVMYD…PTDYVEILPS (62 aa)). Residues 91–201 (SSSAASNNHQ…GNSRASSSSM (111 aa)) are disordered. 2 stretches are compositionally biased toward polar residues: residues 111–121 (WSASKSGNWES) and 135–145 (QRNTNTPNNWD). Phosphoserine occurs at positions 116 and 121. The span at 160 to 169 (GDDDDWDEDW) shows a compositional bias: acidic residues. Residues 191–201 (RGNSRASSSSM) show a composition bias toward polar residues. 2 positions are modified to phosphoserine: Ser-197 and Ser-200. The tract at residues 201–213 (MKIPLNKFPGFAK) is critical for tubulation activity. Phosphothreonine is present on Thr-216. Tyr-239 carries the phosphotyrosine modification. Positions 250–361 (FDCVVADPRK…QFLNFRDEKE (112 aa)) constitute a PX domain. The a 1,2-diacyl-sn-glycero-3-phospho-(1D-myo-inositol-4,5-bisphosphate) site is built by Arg-286, Lys-288, and Arg-327. Lys-288 bears the N6-acetyllysine mark. The BAR domain occupies 392-595 (LVEIEQKCEA…RQALSRFPVM (204 aa)).

It belongs to the sorting nexin family. As to quaternary structure, homodimer, and homooligomer. Heterodimer with SNX18. Interacts with ITCH. Interacts (via SH3 domain) with TNK2, WASL and ACTR3. Identified in a complex with TNK2 and clathrin heavy chains. Identified in a complex with the AP-2 complex, clathrin and DNM2. Interacts (via SH3 domain) with DNM1 and DNM2. Identified in an oligomeric complex containing DNM1 and SNX9. Interacts with FCHSD1. Interacts with ADAM9 and ADAM15 cytoplasmic tails. In terms of processing, ubiquitinated by ITCH. Phosphorylated on tyrosine residues by TNK2. Phosphorylation promotes its activity in the degradation of EGFR. As to expression, widely expressed, with highest levels in heart and placenta, and lowest levels in thymus and peripheral blood leukocytes.

The protein resides in the cytoplasmic vesicle membrane. It is found in the cell membrane. Its subcellular location is the cytoplasmic vesicle. The protein localises to the clathrin-coated vesicle. It localises to the golgi apparatus. The protein resides in the trans-Golgi network. It is found in the cell projection. Its subcellular location is the ruffle. The protein localises to the cytoplasm. Its function is as follows. Involved in endocytosis and intracellular vesicle trafficking, both during interphase and at the end of mitosis. Required for efficient progress through mitosis and cytokinesis. Required for normal formation of the cleavage furrow at the end of mitosis. Plays a role in endocytosis via clathrin-coated pits, but also clathrin-independent, actin-dependent fluid-phase endocytosis. Plays a role in macropinocytosis. Promotes internalization of TNFR. Promotes degradation of EGFR after EGF signaling. Stimulates the GTPase activity of DNM1. Promotes DNM1 oligomerization. Promotes activation of the Arp2/3 complex by WASL, and thereby plays a role in the reorganization of the F-actin cytoskeleton. Binds to membranes enriched in phosphatidylinositol 4,5-bisphosphate and promotes membrane tubulation. Has lower affinity for membranes enriched in phosphatidylinositol 3-phosphate. The sequence is that of Sorting nexin-9 (SNX9) from Homo sapiens (Human).